The sequence spans 321 residues: GTP 3',8-cyclase (321 aa).

The Radical SAM core domain occupies serine 5–glutamate 233. Arginine 14 is a GTP binding site. [4Fe-4S] cluster-binding residues include cysteine 21 and cysteine 25. Tyrosine 27 is a binding site for S-adenosyl-L-methionine. Cysteine 28 lines the [4Fe-4S] cluster pocket. Arginine 64 provides a ligand contact to GTP. An S-adenosyl-L-methionine-binding site is contributed by glycine 68. Residue serine 95 participates in GTP binding. S-adenosyl-L-methionine is bound at residue serine 119. Residue lysine 155 coordinates GTP. Methionine 189 contacts S-adenosyl-L-methionine. Residues cysteine 249 and cysteine 252 each contribute to the [4Fe-4S] cluster site. Arginine 254–arginine 256 serves as a coordination point for GTP. Cysteine 266 serves as a coordination point for [4Fe-4S] cluster.

This sequence belongs to the radical SAM superfamily. MoaA family. Monomer and homodimer. It depends on [4Fe-4S] cluster as a cofactor.

It catalyses the reaction GTP + AH2 + S-adenosyl-L-methionine = (8S)-3',8-cyclo-7,8-dihydroguanosine 5'-triphosphate + 5'-deoxyadenosine + L-methionine + A + H(+). Its pathway is cofactor biosynthesis; molybdopterin biosynthesis. Catalyzes the cyclization of GTP to (8S)-3',8-cyclo-7,8-dihydroguanosine 5'-triphosphate. This chain is GTP 3',8-cyclase, found in Helicobacter pylori (strain ATCC 700392 / 26695) (Campylobacter pylori).